A 318-amino-acid polypeptide reads, in one-letter code: Pantothenate kinase (318 aa).

96–103 (GSVAVGKS) contributes to the ATP binding site.

The protein belongs to the prokaryotic pantothenate kinase family.

It localises to the cytoplasm. It carries out the reaction (R)-pantothenate + ATP = (R)-4'-phosphopantothenate + ADP + H(+). Its pathway is cofactor biosynthesis; coenzyme A biosynthesis; CoA from (R)-pantothenate: step 1/5. The sequence is that of Pantothenate kinase from Coxiella burnetii (strain RSA 493 / Nine Mile phase I).